Reading from the N-terminus, the 438-residue chain is Rhomboid-related protein 1 (438 aa).

A disordered region spans residues 1–62 (MGRVEDGGTT…PSQPGPALWS (62 aa)). The segment covering 8–17 (GTTEELEDWD) has biased composition (acidic residues). 7 helical membrane passes run 196–216 (PPVF…CYGA), 262–282 (GFNA…HGLL), 284–304 (ISLL…ITDM), 308–328 (VVGG…NVVM), 340–359 (LRMV…AVWL), 372–392 (PSFM…LTIL), and 405–425 (WWVV…WNVF). S312 serves as the catalytic Nucleophile. Residue H377 is part of the active site.

This sequence belongs to the peptidase S54 family. As to expression, detected in heart, brain, skeletal muscle and kidney.

The protein resides in the membrane. The enzyme catalyses Cleaves type-1 transmembrane domains using a catalytic dyad composed of serine and histidine that are contributed by different transmembrane domains.. Functionally, may be involved in regulated intramembrane proteolysis and the subsequent release of functional polypeptides from their membrane anchors. This chain is Rhomboid-related protein 1 (RHBDL1), found in Homo sapiens (Human).